A 256-amino-acid chain; its full sequence is MQIDRLPVLSDNYIFLVLDPERRQAAVVDPAVAAPVLERLRSLQFQLVAIFNTHHHHDHVGGNQELLQHFPTAVVYGGAEDRGRIPGQQVFLQPGDRVNFAQRTAEVLFVPGHTRAHIAYYFPPVNHSSGELFCGDTLFAGGCGRLFEGTPAQMVNSLNQLRQLPDNTRVWCAHEYTLKNLQFALTIEPENVELQTRLAQVYLARQHFQPTVPSELGLEKRTNPFLRWDVPQVQQSVKGQDGIQTFTRLRGRKDQF.

Zn(2+) contacts are provided by H54, H56, D58, H59, H113, D136, and H174.

The protein belongs to the metallo-beta-lactamase superfamily. Glyoxalase II family. In terms of assembly, monomer. The cofactor is Zn(2+).

It carries out the reaction an S-(2-hydroxyacyl)glutathione + H2O = a 2-hydroxy carboxylate + glutathione + H(+). It participates in secondary metabolite metabolism; methylglyoxal degradation; (R)-lactate from methylglyoxal: step 2/2. In terms of biological role, thiolesterase that catalyzes the hydrolysis of S-D-lactoyl-glutathione to form glutathione and D-lactic acid. The protein is Hydroxyacylglutathione hydrolase of Cyanothece sp. (strain PCC 7425 / ATCC 29141).